The sequence spans 104 residues: uncharacterized protein (104 aa).

The next 2 membrane-spanning stretches (helical) occupy residues 47–67 and 72–92; these read IDHR…LAML and VGHV…FVLA.

It to M.leprae ML1584.

The protein resides in the cell membrane. This is an uncharacterized protein from Mycobacterium tuberculosis (strain CDC 1551 / Oshkosh).